A 431-amino-acid polypeptide reads, in one-letter code: MSISIETLEGLQRRVTVTVAADKIEAGYKEQLKGYAKNARVDGFRKGKVPHSIIEQRYGLAARQDVLSEEMQRAFFDVVIAEKINLAGRPTFTPNNYQPGQDFSFVATFEVFPEVELKGLENIEVEKPVVEITEADLDKMVDVLRKQQATFAETTEAAKADDRVTIDFVGSVDGEEFEGGKASDFVLAMGQGRMIPGFEEGIVGHKAGEQFDIDVIFPAEYHAENLKGKAAKFAITLKKVENIVLPELTEEFVKKFGSAKTVEELRVEIKKNMQRELKNALTTRVKNQVINGLLANNDIEVPSSAVAEEVDVLRQQAVQRFGGKPEMAAQLPAELFEVEAKRRVQVGLLLSSVITSNELKVDEDRVKETISELASAYEQPAEVVEYYAKNPRLTDNIRNVVLEEQAVEAVLAKAKVTEKASSFDEVMSHQG.

The region spanning 161-246 (DDRVTIDFVG…LKKVENIVLP (86 aa)) is the PPIase FKBP-type domain.

The protein belongs to the FKBP-type PPIase family. Tig subfamily.

It localises to the cytoplasm. The catalysed reaction is [protein]-peptidylproline (omega=180) = [protein]-peptidylproline (omega=0). In terms of biological role, involved in protein export. Acts as a chaperone by maintaining the newly synthesized protein in an open conformation. Functions as a peptidyl-prolyl cis-trans isomerase. The protein is Trigger factor of Glaesserella parasuis serovar 5 (strain SH0165) (Haemophilus parasuis).